Here is an 885-residue protein sequence, read N- to C-terminus: Lon protease homolog 2, peroxisomal (885 aa).

A Lon N-terminal domain is found at leucine 12–leucine 256. Positions leucine 70–proline 104 are disordered. Over residues serine 77 to valine 86 the composition is skewed to gly residues. The span at serine 94–proline 104 shows a compositional bias: basic and acidic residues. An ATP-binding site is contributed by glycine 409–threonine 416. Residues valine 690–glycine 875 enclose the Lon proteolytic domain. Catalysis depends on residues serine 781 and lysine 824. Residues serine 883 to leucine 885 carry the Microbody targeting signal motif.

This sequence belongs to the peptidase S16 family.

Its subcellular location is the peroxisome matrix. The catalysed reaction is Hydrolysis of proteins in presence of ATP.. ATP-dependent serine protease that mediates the selective degradation of misfolded and unassembled polypeptides in the peroxisomal matrix. Necessary for type 2 peroxisome targeting signal (PTS2)-containing protein processing and facilitates peroxisome matrix protein import. This Zea mays (Maize) protein is Lon protease homolog 2, peroxisomal (LON1).